A 208-amino-acid polypeptide reads, in one-letter code: Probable GTP-binding protein EngB (208 aa).

Positions 23–205 constitute an EngB-type G domain; it reads LTSEMVILGR…RQTLLKYLLT (183 aa). Residues 31–38, 57–61, 84–87, 154–157, and 182–184 each bind GTP; these read GRSNVGKS, GKTRL, DLPG, TKFD, and FNA. The Mg(2+) site is built by serine 38 and threonine 59.

This sequence belongs to the TRAFAC class TrmE-Era-EngA-EngB-Septin-like GTPase superfamily. EngB GTPase family. Requires Mg(2+) as cofactor.

Necessary for normal cell division and for the maintenance of normal septation. This chain is Probable GTP-binding protein EngB, found in Helicobacter pylori (strain J99 / ATCC 700824) (Campylobacter pylori J99).